The primary structure comprises 94 residues: Large ribosomal subunit protein eL37 (94 aa).

4 residues coordinate Zn(2+): Cys19, Cys22, Cys34, and Cys37. The C4-type zinc-finger motif lies at 19–37 (CRRCGKATYHKQKLRCAAC).

The protein belongs to the eukaryotic ribosomal protein eL37 family. It depends on Zn(2+) as a cofactor.

Its subcellular location is the cytoplasm. Binds to the 23S rRNA. This chain is Large ribosomal subunit protein eL37 (RPL37), found in Tetrahymena thermophila (strain SB210).